Here is a 227-residue protein sequence, read N- to C-terminus: Phosphatidylserine decarboxylase proenzyme (227 aa).

The active-site Schiff-base intermediate with substrate; via pyruvic acid is the Ser-184. Position 184 is a pyruvic acid (Ser); by autocatalysis (Ser-184).

It belongs to the phosphatidylserine decarboxylase family. PSD-A subfamily. Heterodimer of a large membrane-associated beta subunit and a small pyruvoyl-containing alpha subunit. The cofactor is pyruvate. In terms of processing, is synthesized initially as an inactive proenzyme. Formation of the active enzyme involves a self-maturation process in which the active site pyruvoyl group is generated from an internal serine residue via an autocatalytic post-translational modification. Two non-identical subunits are generated from the proenzyme in this reaction, and the pyruvate is formed at the N-terminus of the alpha chain, which is derived from the carboxyl end of the proenzyme. The post-translation cleavage follows an unusual pathway, termed non-hydrolytic serinolysis, in which the side chain hydroxyl group of the serine supplies its oxygen atom to form the C-terminus of the beta chain, while the remainder of the serine residue undergoes an oxidative deamination to produce ammonia and the pyruvoyl prosthetic group on the alpha chain.

It is found in the cell membrane. The catalysed reaction is a 1,2-diacyl-sn-glycero-3-phospho-L-serine + H(+) = a 1,2-diacyl-sn-glycero-3-phosphoethanolamine + CO2. Its pathway is phospholipid metabolism; phosphatidylethanolamine biosynthesis; phosphatidylethanolamine from CDP-diacylglycerol: step 2/2. Functionally, catalyzes the formation of phosphatidylethanolamine (PtdEtn) from phosphatidylserine (PtdSer). The polypeptide is Phosphatidylserine decarboxylase proenzyme (Ehrlichia ruminantium (strain Welgevonden)).